The chain runs to 335 residues: Mitochondrial carrier protein CoAc2 (335 aa).

6 helical membrane-spanning segments follow: residues 12-32, 75-95, 119-139, 187-207, 225-242, and 280-302; these read SGPG…AGGV, FYRG…LHYM, LVAG…LDLV, GMAP…YFYE, LGCG…TYPL, and LFSG…FTVY. 3 Solcar repeats span residues 17 to 103, 113 to 212, and 219 to 308; these read PLAV…YRRW, QGPV…MKSH, and KGII…MKVC.

It belongs to the mitochondrial carrier (TC 2.A.29) family. Expressed throughout the plant.

Its subcellular location is the mitochondrion inner membrane. In terms of biological role, required for the accumulation of coenzyme A in the mitochondrial matrix. This is Mitochondrial carrier protein CoAc2 from Zea mays (Maize).